The sequence spans 594 residues: Membrane protein insertase YidC (594 aa).

A helical membrane pass occupies residues 7-27 (YFVAIALSVLILIAWQFFYVS). A disordered region spans residues 36-73 (AAEQAQQAQQTQQQPGAQPAAPGQALPGGAIPSAGESR). A compositionally biased stretch (low complexity) spans 37–65 (AEQAQQAQQTQQQPGAQPAAPGQALPGGA). The next 4 membrane-spanning stretches (helical) occupy residues 369–389 (LFGN…LIFF), 443–463 (WPIL…YVTI), 488–508 (LFGL…WPII), and 532–552 (FTWM…GLVI).

The protein belongs to the OXA1/ALB3/YidC family. Type 1 subfamily. As to quaternary structure, interacts with the Sec translocase complex via SecD. Specifically interacts with transmembrane segments of nascent integral membrane proteins during membrane integration.

The protein localises to the cell inner membrane. Functionally, required for the insertion and/or proper folding and/or complex formation of integral membrane proteins into the membrane. Involved in integration of membrane proteins that insert both dependently and independently of the Sec translocase complex, as well as at least some lipoproteins. Aids folding of multispanning membrane proteins. The chain is Membrane protein insertase YidC from Rhizobium meliloti (strain 1021) (Ensifer meliloti).